The following is a 175-amino-acid chain: ATP synthase subunit b (175 aa).

A helical transmembrane segment spans residues Val-18–Leu-38.

It belongs to the ATPase B chain family. In terms of assembly, F-type ATPases have 2 components, F(1) - the catalytic core - and F(0) - the membrane proton channel. F(1) has five subunits: alpha(3), beta(3), gamma(1), delta(1), epsilon(1). F(0) has three main subunits: a(1), b(2) and c(10-14). The alpha and beta chains form an alternating ring which encloses part of the gamma chain. F(1) is attached to F(0) by a central stalk formed by the gamma and epsilon chains, while a peripheral stalk is formed by the delta and b chains.

The protein resides in the cell inner membrane. Functionally, f(1)F(0) ATP synthase produces ATP from ADP in the presence of a proton or sodium gradient. F-type ATPases consist of two structural domains, F(1) containing the extramembraneous catalytic core and F(0) containing the membrane proton channel, linked together by a central stalk and a peripheral stalk. During catalysis, ATP synthesis in the catalytic domain of F(1) is coupled via a rotary mechanism of the central stalk subunits to proton translocation. Component of the F(0) channel, it forms part of the peripheral stalk, linking F(1) to F(0). This is ATP synthase subunit b from Akkermansia muciniphila (strain ATCC BAA-835 / DSM 22959 / JCM 33894 / BCRC 81048 / CCUG 64013 / CIP 107961 / Muc).